A 180-amino-acid chain; its full sequence is Nucleoside-triphosphatase THEP1 (180 aa).

Residues 9-16 (GRPGIGKT) and 99-106 (VVIVDEVG) each bind ATP.

This sequence belongs to the THEP1 NTPase family.

It catalyses the reaction a ribonucleoside 5'-triphosphate + H2O = a ribonucleoside 5'-diphosphate + phosphate + H(+). Functionally, has nucleotide phosphatase activity towards ATP, GTP, CTP, TTP and UTP. May hydrolyze nucleoside diphosphates with lower efficiency. The polypeptide is Nucleoside-triphosphatase THEP1 (Methanopyrus kandleri (strain AV19 / DSM 6324 / JCM 9639 / NBRC 100938)).